Consider the following 177-residue polypeptide: R-phycoerythrin beta chain (177 aa).

Phycourobilin-binding residues include C50 and C61. At N72 the chain carries N4-methylasparagine. Positions 82 and 158 each coordinate (2R,3E)-phycoerythrobilin.

It belongs to the phycobiliprotein family. Heterodimer of an alpha and a beta chain. Contains two covalently linked phycoerythrobilin chromophores and one covalently linked phycourobilin chromophore.

It is found in the plastid. The protein resides in the chloroplast thylakoid membrane. Functionally, light-harvesting photosynthetic bile pigment-protein from the phycobiliprotein complex. In Lophosiphonia boldii (Red alga), this protein is R-phycoerythrin beta chain (cpeB).